The sequence spans 385 residues: Protein pelota homolog (385 aa).

It belongs to the eukaryotic release factor 1 family. Pelota subfamily. In terms of assembly, component of the Pelota-HBS1L complex, also named Dom34-Hbs1 complex, composed of PELO and HBS1L. A divalent metal cation is required as a cofactor.

It localises to the cytoplasm. Its function is as follows. Component of the Pelota-HBS1L complex, a complex that recognizes stalled ribosomes and triggers the No-Go Decay (NGD) pathway. In the Pelota-HBS1L complex, PELO recognizes ribosomes stalled at the 3' end of an mRNA and engages stalled ribosomes by destabilizing mRNA in the mRNA channel. Following mRNA extraction from stalled ribosomes by the SKI complex, the Pelota-HBS1L complex promotes recruitment of ABCE1, which drives the disassembly of stalled ribosomes, followed by degradation of damaged mRNAs as part of the NGD pathway. The sequence is that of Protein pelota homolog (PELO) from Gallus gallus (Chicken).